A 128-amino-acid polypeptide reads, in one-letter code: 3-aminoacrylate deaminase RutC (128 aa).

This sequence belongs to the RutC family. In terms of assembly, homotrimer.

It carries out the reaction (Z)-3-aminoacrylate + H2O + H(+) = 3-oxopropanoate + NH4(+). Functionally, involved in pyrimidine catabolism. Catalyzes the deamination of 3-aminoacrylate to malonic semialdehyde, a reaction that can also occur spontaneously. RutC may facilitate the reaction and modulate the metabolic fitness, rather than catalyzing essential functions. The polypeptide is 3-aminoacrylate deaminase RutC (Shigella flexneri serotype X (strain 2002017)).